We begin with the raw amino-acid sequence, 106 residues long: Ribulose bisphosphate carboxylase small subunit (106 aa).

Belongs to the RuBisCO small chain family. In terms of assembly, heterohexadecamer of 8 large and 8 small subunits.

The protein localises to the plastid. Its subcellular location is the cyanelle. Its function is as follows. RuBisCO catalyzes two reactions: the carboxylation of D-ribulose 1,5-bisphosphate, the primary event in carbon dioxide fixation, as well as the oxidative fragmentation of the pentose substrate. Both reactions occur simultaneously and in competition at the same active site. Although the small subunit is not catalytic it is essential for maximal activity. The protein is Ribulose bisphosphate carboxylase small subunit of Cyanophora paradoxa.